The chain runs to 351 residues: Anthranilate phosphoribosyltransferase (351 aa).

5-phospho-alpha-D-ribose 1-diphosphate-binding positions include G92, 95-96 (GD), T100, 102-105 (NIST), 120-128 (KHGNRAASS), and S132. G92 serves as a coordination point for anthranilate. Mg(2+) is bound at residue S104. N123 provides a ligand contact to anthranilate. Anthranilate is bound at residue R178. Residues D236 and E237 each contribute to the Mg(2+) site.

It belongs to the anthranilate phosphoribosyltransferase family. Homodimer. It depends on Mg(2+) as a cofactor.

It catalyses the reaction N-(5-phospho-beta-D-ribosyl)anthranilate + diphosphate = 5-phospho-alpha-D-ribose 1-diphosphate + anthranilate. The protein operates within amino-acid biosynthesis; L-tryptophan biosynthesis; L-tryptophan from chorismate: step 2/5. Catalyzes the transfer of the phosphoribosyl group of 5-phosphorylribose-1-pyrophosphate (PRPP) to anthranilate to yield N-(5'-phosphoribosyl)-anthranilate (PRA). The sequence is that of Anthranilate phosphoribosyltransferase from Deinococcus geothermalis (strain DSM 11300 / CIP 105573 / AG-3a).